The sequence spans 320 residues: tRNA N6-adenosine threonylcarbamoyltransferase (320 aa).

Residues histidine 113 and histidine 117 each coordinate Fe cation. Substrate is bound by residues 143–147, aspartate 176, glycine 189, aspartate 193, and asparagine 281; that span reads VVSGG. Aspartate 305 lines the Fe cation pocket.

The protein belongs to the KAE1 / TsaD family. It depends on Fe(2+) as a cofactor.

Its subcellular location is the cytoplasm. The catalysed reaction is L-threonylcarbamoyladenylate + adenosine(37) in tRNA = N(6)-L-threonylcarbamoyladenosine(37) in tRNA + AMP + H(+). Functionally, required for the formation of a threonylcarbamoyl group on adenosine at position 37 (t(6)A37) in tRNAs that read codons beginning with adenine. Is involved in the transfer of the threonylcarbamoyl moiety of threonylcarbamoyl-AMP (TC-AMP) to the N6 group of A37, together with TsaE and TsaB. TsaD likely plays a direct catalytic role in this reaction. In Mycoplasmoides gallisepticum (strain R(low / passage 15 / clone 2)) (Mycoplasma gallisepticum), this protein is tRNA N6-adenosine threonylcarbamoyltransferase.